We begin with the raw amino-acid sequence, 168 residues long: Disulfide bond formation protein B (168 aa).

Residues 1–6 lie on the Cytoplasmic side of the membrane; the sequence is MTSRWI. Residues 7 to 23 traverse the membrane as a helical segment; that stretch reads FGLVFLVCAGLLAVAFY. Topologically, residues 24–41 are periplasmic; that stretch reads MEHVMGLEPCPLCWLQRF. C33 and C36 are disulfide-bonded. A helical transmembrane segment spans residues 42–58; the sequence is GFMGAGLVSLLAFLHGP. At 59–65 the chain is on the cytoplasmic side; the sequence is RGFGNRV. Residues 66–82 traverse the membrane as a helical segment; the sequence is YGLLLIVAAGAGLAVAG. Over 83–139 the chain is Periplasmic; that stretch reads RQLWLQSLPADQVPACGPSVDYMLEVLPWFEVLQTALKGTGDCAEVVWRFLGLSIPG. The cysteines at positions 98 and 125 are disulfide-linked. Residues 140–158 form a helical membrane-spanning segment; it reads WTAVFFSLLIVLGLFVMLR. At 159 to 168 the chain is on the cytoplasmic side; the sequence is RYSPRDWLQS.

The protein belongs to the DsbB family.

The protein localises to the cell inner membrane. Required for disulfide bond formation in some periplasmic proteins. Acts by oxidizing the DsbA protein. This chain is Disulfide bond formation protein B, found in Marinobacter nauticus (strain ATCC 700491 / DSM 11845 / VT8) (Marinobacter aquaeolei).